Here is a 152-residue protein sequence, read N- to C-terminus: D-aminoacyl-tRNA deacylase (152 aa).

The short motif at 137–138 (GP) is the Gly-cisPro motif, important for rejection of L-amino acids element.

Belongs to the DTD family. As to quaternary structure, homodimer.

It localises to the cytoplasm. It catalyses the reaction glycyl-tRNA(Ala) + H2O = tRNA(Ala) + glycine + H(+). The catalysed reaction is a D-aminoacyl-tRNA + H2O = a tRNA + a D-alpha-amino acid + H(+). Its function is as follows. An aminoacyl-tRNA editing enzyme that deacylates mischarged D-aminoacyl-tRNAs. Also deacylates mischarged glycyl-tRNA(Ala), protecting cells against glycine mischarging by AlaRS. Acts via tRNA-based rather than protein-based catalysis; rejects L-amino acids rather than detecting D-amino acids in the active site. By recycling D-aminoacyl-tRNA to D-amino acids and free tRNA molecules, this enzyme counteracts the toxicity associated with the formation of D-aminoacyl-tRNA entities in vivo and helps enforce protein L-homochirality. In Methylibium petroleiphilum (strain ATCC BAA-1232 / LMG 22953 / PM1), this protein is D-aminoacyl-tRNA deacylase.